The following is a 774-amino-acid chain: Pentatricopeptide repeat-containing protein At4g20770 (774 aa).

PPR repeat units lie at residues 5 to 39, 40 to 70, 71 to 101, 102 to 136, 137 to 171, 172 to 203, 204 to 238, 239 to 270, 283 to 313, 314 to 348, 349 to 379, 380 to 414, 415 to 449, 450 to 480, 482 to 516, 518 to 552, 553 to 583, 584 to 618, 619 to 654, and 655 to 685; these read GNKY…GMKS, DTYL…MSVR, DVYS…MPER, DVVS…GFLP, SRFT…GLDK, NIFV…LSQP, NEVS…GVQV, DSVC…LGKQ, DLHL…MPEV, NVVS…GFQP, NEVT…IPQP, SVSA…NLKP, DKTT…EISK, NSHI…CINE, DIAC…AVLC, NETS…GYVS, DSFV…VLRK, NTVI…GEKP, DGIT…GIEP, and ELDH…TPYK. Residues 690–765 are type E motif; it reads LWEILLSSCR…TPGQSWTTYG (76 aa).

Belongs to the PPR family. PCMP-E subfamily.

This chain is Pentatricopeptide repeat-containing protein At4g20770 (PCMP-E35), found in Arabidopsis thaliana (Mouse-ear cress).